We begin with the raw amino-acid sequence, 451 residues long: UDP-N-acetylmuramoylalanine--D-glutamate ligase (451 aa).

An ATP-binding site is contributed by 119-125 (GSNGKTT).

It belongs to the MurCDEF family.

It is found in the cytoplasm. It catalyses the reaction UDP-N-acetyl-alpha-D-muramoyl-L-alanine + D-glutamate + ATP = UDP-N-acetyl-alpha-D-muramoyl-L-alanyl-D-glutamate + ADP + phosphate + H(+). Its pathway is cell wall biogenesis; peptidoglycan biosynthesis. Functionally, cell wall formation. Catalyzes the addition of glutamate to the nucleotide precursor UDP-N-acetylmuramoyl-L-alanine (UMA). The polypeptide is UDP-N-acetylmuramoylalanine--D-glutamate ligase (Geobacillus sp. (strain WCH70)).